The chain runs to 446 residues: Methionine aminopeptidase 2-3 (446 aa).

The tract at residues 14–116 is disordered; that stretch reads ITDAGANGAD…ENRYRTTSEE (103 aa). Positions 61–76 are enriched in basic residues; the sequence is AKKKKNKKRKPKKKQP. The segment covering 86-96 has biased composition (polar residues); that stretch reads PLSQLFPNNSY. The segment covering 98–116 has biased composition (basic and acidic residues); sequence KGEEVEYKDENRYRTTSEE. A substrate-binding site is contributed by His199. Residues Asp219, Asp230, and His299 each contribute to the a divalent metal cation site. Residue His307 coordinates substrate. A divalent metal cation-binding residues include Glu332 and Glu427.

Belongs to the peptidase M24A family. Methionine aminopeptidase eukaryotic type 2 subfamily. Requires Co(2+) as cofactor. The cofactor is Zn(2+). Mn(2+) is required as a cofactor. It depends on Fe(2+) as a cofactor.

The protein resides in the cytoplasm. The catalysed reaction is Release of N-terminal amino acids, preferentially methionine, from peptides and arylamides.. In terms of biological role, cotranslationally removes the N-terminal methionine from nascent proteins. The N-terminal methionine is often cleaved when the second residue in the primary sequence is small and uncharged (Met-Ala-, Cys, Gly, Pro, Ser, Thr, or Val). The protein is Methionine aminopeptidase 2-3 of Aspergillus fumigatus (strain CBS 144.89 / FGSC A1163 / CEA10) (Neosartorya fumigata).